A 1449-amino-acid polypeptide reads, in one-letter code: Conserved oligomeric Golgi complex subunit 1 (1449 aa).

Disordered stretches follow at residues 503 to 529, 916 to 960, 1303 to 1338, and 1401 to 1422; these read NSSG…NNSG, LDTI…INNN, KQSI…QQSD, and RNQQ…ILSP. 2 stretches are compositionally biased toward low complexity: residues 517–528 and 930–960; these read NTNNNNSNNNNS and THSS…INNN. Over residues 1305 to 1322 the composition is skewed to polar residues; that stretch reads SINGGQQSPPLATTSSNG. The span at 1401–1414 shows a compositional bias: low complexity; it reads RNQQQQQQNNTNQQ.

The protein belongs to the COG1 family. As to quaternary structure, component of the conserved oligomeric Golgi complex which is composed of eight different subunits and is required for normal Golgi morphology and localization.

It localises to the golgi apparatus membrane. Required for normal Golgi function. This Dictyostelium discoideum (Social amoeba) protein is Conserved oligomeric Golgi complex subunit 1 (cog1).